We begin with the raw amino-acid sequence, 470 residues long: Uronate isomerase (470 aa).

The protein belongs to the metallo-dependent hydrolases superfamily. Uronate isomerase family.

It catalyses the reaction D-glucuronate = D-fructuronate. It carries out the reaction aldehydo-D-galacturonate = keto-D-tagaturonate. It functions in the pathway carbohydrate metabolism; pentose and glucuronate interconversion. This is Uronate isomerase from Shigella boydii serotype 4 (strain Sb227).